The following is a 514-amino-acid chain: MSVSKKPMVLVILDGYGYREEQQDNAILNAKTPVMDALWAKRPHTLIDASGLEVGLPDRQMGNSEVGHVNLGAGRIVYQDLTRLDVEIKERTFFANPVLTNAVDQAKNAGKAVHIMGLLSAGGVHSHEDHIMAMVELAAERGAEKIYLHAFLDGRDTPPRSAEASLKKFEDKFAALGKGRVASIVGRYYAMDRDNRWDRVEKAYDLMTLAQGEFQADTAVAGLQAAYARDENDEFVKATVIRAEGQADAAMEDGDTLIFMNFRADRAREITRAFVNADFDGFARKKVVNLNFVMLTEYAADIKTAVAYPPASLANTFGEWMAKNDKTQLRISETEKYAHVTFFFNGGVEEPFAGEERILINSPKVATYDLQPEMSSAELTEKLVAAIESGKYDTIICNYPNGDMVGHTGVMEAAIKAVEALDNCIEQVTKAVESVGGQLLITADHGNAEQMRDPATGQAHTAHTNLPVPLIYVGEKNVKAVEGGKLSDIAPTMLSLMGMEIPQEMTGKPLFIVE.

Aspartate 14 and serine 64 together coordinate Mn(2+). Serine 64 serves as the catalytic Phosphoserine intermediate. Substrate is bound by residues histidine 125, 155–156, arginine 187, arginine 193, 263–266, and lysine 336; these read RD and RADR. The Mn(2+) site is built by aspartate 403, histidine 407, aspartate 444, histidine 445, and histidine 463.

This sequence belongs to the BPG-independent phosphoglycerate mutase family. Monomer. Mn(2+) is required as a cofactor.

The catalysed reaction is (2R)-2-phosphoglycerate = (2R)-3-phosphoglycerate. It functions in the pathway carbohydrate degradation; glycolysis; pyruvate from D-glyceraldehyde 3-phosphate: step 3/5. Its function is as follows. Catalyzes the interconversion of 2-phosphoglycerate and 3-phosphoglycerate. This is 2,3-bisphosphoglycerate-independent phosphoglycerate mutase from Salmonella paratyphi A (strain ATCC 9150 / SARB42).